The primary structure comprises 377 residues: MNNQEYYDRLGVSKDASQDEIKKAYRRMSKKYHPDINKEPGAEEKYKEIQEAYDTLGDEQKRAAYDQYGPAGANGGFGDGSGFSGFDSSGFGGFEDIFSSFFGGGASRNPNAPRQGDDLQYRVNLQFEEAVFGTEKEVHYNREASCHTCNGSGAKPGTSPVTCSKCHGSGVINMDTQTPLGMMRRQVTCDVCHGTGQEIKEPCPTCHGTGHEKQSHKVSVKIPAGVETGQQIRLAGQGEAGFNGGPYGDLFVIINVLKSDKFERDGSTIYYSMDINFVQAALGDTVEVPTVHGNVELAIPAGTQTGKTFRLKGKGAPRLRGNGQGDQHVTVNVVTPTKLNDAQKEALQDFAKASGINPVHPKKKGFFNKVKDAFDEM.

The J domain maps to 5–69 (EYYDRLGVSK…QKRAAYDQYG (65 aa)). Residues 133–215 (GTEKEVHYNR…CHGTGHEKQS (83 aa)) form a CR-type zinc finger. Cys146, Cys149, Cys163, Cys166, Cys189, Cys192, Cys203, and Cys206 together coordinate Zn(2+). CXXCXGXG motif repeat units follow at residues 146–153 (CHTCNGSG), 163–170 (CSKCHGSG), 189–196 (CDVCHGTG), and 203–210 (CPTCHGTG).

The protein belongs to the DnaJ family. Homodimer. Requires Zn(2+) as cofactor.

Its subcellular location is the cytoplasm. Functionally, participates actively in the response to hyperosmotic and heat shock by preventing the aggregation of stress-denatured proteins and by disaggregating proteins, also in an autonomous, DnaK-independent fashion. Unfolded proteins bind initially to DnaJ; upon interaction with the DnaJ-bound protein, DnaK hydrolyzes its bound ATP, resulting in the formation of a stable complex. GrpE releases ADP from DnaK; ATP binding to DnaK triggers the release of the substrate protein, thus completing the reaction cycle. Several rounds of ATP-dependent interactions between DnaJ, DnaK and GrpE are required for fully efficient folding. Also involved, together with DnaK and GrpE, in the DNA replication of plasmids through activation of initiation proteins. The polypeptide is Chaperone protein DnaJ (Streptococcus mutans serotype c (strain ATCC 700610 / UA159)).